A 175-amino-acid chain; its full sequence is B9 domain-containing protein 2 (175 aa).

The C2 B9-type domain occupies 2–118 (AEVHVIGQII…DCPTWRPLGS (117 aa)).

This sequence belongs to the B9D family. In terms of assembly, part of the tectonic-like complex (also named B9 complex). Interacts with TUBG1. As to expression, highest expression in thymus and skeletal muscle. Also expressed in spleen, kidney, lung, heart, microglia and liver. Detected in brain (at protein level).

Its subcellular location is the cytoplasm. It is found in the cytoskeleton. The protein resides in the cilium basal body. The protein localises to the cilium axoneme. It localises to the nucleus. In terms of biological role, component of the tectonic-like complex, a complex localized at the transition zone of primary cilia and acting as a barrier that prevents diffusion of transmembrane proteins between the cilia and plasma membranes. The chain is B9 domain-containing protein 2 (B9d2) from Mus musculus (Mouse).